The chain runs to 305 residues: NAD kinase (305 aa).

Aspartate 76 functions as the Proton acceptor in the catalytic mechanism. NAD(+) is bound by residues 76 to 77 (DG), 150 to 151 (ND), arginine 161, and aspartate 180.

Belongs to the NAD kinase family. A divalent metal cation is required as a cofactor.

It localises to the cytoplasm. The enzyme catalyses NAD(+) + ATP = ADP + NADP(+) + H(+). Its function is as follows. Involved in the regulation of the intracellular balance of NAD and NADP, and is a key enzyme in the biosynthesis of NADP. Catalyzes specifically the phosphorylation on 2'-hydroxyl of the adenosine moiety of NAD to yield NADP. This Treponema pallidum (strain Nichols) protein is NAD kinase.